The primary structure comprises 227 residues: Orotidine 5'-phosphate decarboxylase (227 aa).

Residues D8, K30, 57–66 (DLKFHDIPNT), T116, R177, Q186, G206, and R207 each bind substrate. Residue K59 is the Proton donor of the active site.

It belongs to the OMP decarboxylase family. Type 1 subfamily. As to quaternary structure, homodimer.

It catalyses the reaction orotidine 5'-phosphate + H(+) = UMP + CO2. Its pathway is pyrimidine metabolism; UMP biosynthesis via de novo pathway; UMP from orotate: step 2/2. Functionally, catalyzes the decarboxylation of orotidine 5'-monophosphate (OMP) to uridine 5'-monophosphate (UMP). The chain is Orotidine 5'-phosphate decarboxylase from Acinetobacter baylyi (strain ATCC 33305 / BD413 / ADP1).